A 166-amino-acid chain; its full sequence is Thioredoxin, mitochondrial (166 aa).

The transit peptide at 1 to 59 (MAQRLLLGRFLTSVISRKPPQGVWASLTSKTLQTPQYNAGGLTVMPSPARTVHTTRVCL) directs the protein to the mitochondrion. The region spanning 61–166 (TFNVQDGPDF…LEAFLKKLIG (106 aa)) is the Thioredoxin domain. Active-site nucleophile residues include C90 and C93. C90 and C93 are joined by a disulfide. N6-acetyllysine; alternate is present on K152. The residue at position 152 (K152) is an N6-succinyllysine; alternate.

It belongs to the thioredoxin family. Monomer.

It is found in the mitochondrion. In terms of biological role, important for the control of mitochondrial reactive oxygen species homeostasis, apoptosis regulation and cell viability. Is involved in various redox reactions including the reduction of protein disulfide bonds, through the reversible oxidation of its active center dithiol to a disulfide. The chain is Thioredoxin, mitochondrial (Txn2) from Mus musculus (Mouse).